A 118-amino-acid chain; its full sequence is Large ribosomal subunit protein bL20 (118 aa).

This sequence belongs to the bacterial ribosomal protein bL20 family.

Binds directly to 23S ribosomal RNA and is necessary for the in vitro assembly process of the 50S ribosomal subunit. It is not involved in the protein synthesizing functions of that subunit. This is Large ribosomal subunit protein bL20 from Ectopseudomonas mendocina (strain ymp) (Pseudomonas mendocina).